The sequence spans 190 residues: Acyl-acyl carrier protein thioesterase ATL3, chloroplastic (190 aa).

The transit peptide at 1–49 (MFLQVTGTATPAMPAVVFLNSWRRPLSIPLRSVKTFKPLAFFDLKGGKG) directs the protein to the chloroplast. D66 is a catalytic residue.

Belongs to the 4-hydroxybenzoyl-CoA thioesterase family. Highly expressed in stems and flowers and at lower levels in rosette leaves, cauline leaves and siliques.

The protein localises to the plastid. Its subcellular location is the chloroplast. Acyl-ACP thioesterase involved in the production of fatty acids and beta-keto fatty acids. Can produce fatty acids of long chain (14:1 and 16:1) and beta-keto fatty acids of medium to long chain (8:0, 10:0, 12:0, 12:1, 14:0 and 16:0) when expressed in a heterologous organism (E.coli). Possesses thioesterase activity for lauroyl-ACP (12:0-ACP) in vitro. May play a role in the generation of long fatty acids in the chloroplast. The sequence is that of Acyl-acyl carrier protein thioesterase ATL3, chloroplastic from Arabidopsis thaliana (Mouse-ear cress).